Reading from the N-terminus, the 580-residue chain is Adenine deaminase 2 (580 aa).

This sequence belongs to the metallo-dependent hydrolases superfamily. Adenine deaminase family. Mn(2+) serves as cofactor.

It catalyses the reaction adenine + H2O + H(+) = hypoxanthine + NH4(+). This is Adenine deaminase 2 from Latilactobacillus sakei subsp. sakei (strain 23K) (Lactobacillus sakei subsp. sakei).